A 307-amino-acid chain; its full sequence is Haloalkane dehalogenase (307 aa).

The 125-residue stretch at proline 34–glycine 158 folds into the AB hydrolase-1 domain. The active-site Nucleophile is the aspartate 106. Catalysis depends on glutamate 130, which acts as the Proton donor. Residue histidine 272 is the Proton acceptor of the active site.

Belongs to the haloalkane dehalogenase family. Type 2 subfamily. In terms of assembly, monomer.

It catalyses the reaction 1-haloalkane + H2O = a halide anion + a primary alcohol + H(+). Its pathway is xenobiotic degradation; 1,2-dibromoethane degradation. Functionally, catalyzes hydrolytic cleavage of carbon-halogen bonds in halogenated aliphatic compounds, leading to the formation of the corresponding primary alcohols, halide ions and protons. Has a broad substrate specificity, which includes mono- and di-chlorinated and brominated alkanes. The highest activity was found with 1,2-dibromoethane, whereas low activity was measured with the analog 1,2-dichloroethane. This is Haloalkane dehalogenase (dhaAF) from Mycobacterium sp. (strain GP1).